Consider the following 1212-residue polypeptide: DNA topoisomerase 1 (1212 aa).

One can recognise a Toprim domain in the interval 1-114; it reads MKLVVVESPA…DVERVTFNAI (114 aa). Residues E7 and D80 each coordinate Mg(2+). The region spanning 130-556 is the Topo IA-type catalytic domain; that stretch reads DNDLINAYLA…AFWHDFKPKT (427 aa). The interval 164–169 is interaction with DNA; sequence SAGRVQ. Catalysis depends on Y293, which acts as the O-(5'-phospho-DNA)-tyrosine intermediate. The C4-type zinc finger occupies 592–619; it reads CPSCHTGRLALKGGRFGAFIACSNYPEC. Disordered regions lie at residues 687–742, 758–937, and 1107–1212; these read GKGN…GVST, ALAG…KARA, and RAKM…EVAE. 2 stretches are compositionally biased toward polar residues: residues 708–742 and 770–782; these read ASST…GVST and VSDN…SSTI. Residues 815–840 are compositionally biased toward basic and acidic residues; it reads ADNRLLSHRNGDIDSRAIPADHKDSS. Polar residues-rich tracts occupy residues 881–890 and 897–906; these read AITSDNSPSD and STPSSATSSV. Positions 921–934 are enriched in basic and acidic residues; the sequence is KADEQAKEEEESRK. The span at 1109–1140 shows a compositional bias: basic residues; sequence KMPKKKKTKKAAAKKPAAKKTTTKKAAPKKAT. Residues 1141 to 1151 are compositionally biased toward low complexity; the sequence is TKTATPKSATT. The span at 1167 to 1182 shows a compositional bias: basic residues; the sequence is PAKKAVAKKTTAKKPA. Residues 1183 to 1199 show a composition bias toward low complexity; it reads SKSATKKAPSSKTTAAK.

The protein belongs to the type IA topoisomerase family. As to quaternary structure, monomer. The cofactor is Mg(2+).

The catalysed reaction is ATP-independent breakage of single-stranded DNA, followed by passage and rejoining.. Releases the supercoiling and torsional tension of DNA, which is introduced during the DNA replication and transcription, by transiently cleaving and rejoining one strand of the DNA duplex. Introduces a single-strand break via transesterification at a target site in duplex DNA. The scissile phosphodiester is attacked by the catalytic tyrosine of the enzyme, resulting in the formation of a DNA-(5'-phosphotyrosyl)-enzyme intermediate and the expulsion of a 3'-OH DNA strand. The free DNA strand then undergoes passage around the unbroken strand, thus removing DNA supercoils. Finally, in the religation step, the DNA 3'-OH attacks the covalent intermediate to expel the active-site tyrosine and restore the DNA phosphodiester backbone. The polypeptide is DNA topoisomerase 1 (Zymomonas mobilis subsp. mobilis (strain ATCC 31821 / ZM4 / CP4)).